The following is a 762-amino-acid chain: Protein PHTF1 (762 aa).

The 145-residue stretch at 6 to 150 (RDAISWYQKK…VHCQIVSTQI (145 aa)) folds into the PHTF domain. Helical transmembrane passes span 77–97 (GLVR…VTSL), 99–119 (IFVW…LYFM), and 121–141 (PIVN…MGTV). Residues 152 to 188 (RPSGNNGNRRRRKLRKTVNGDGSRENGNNSSDKARGV) are disordered. 3 N-linked (GlcNAc...) asparagine glycosylation sites follow: Asn179, Asn180, and Asn197. Phosphoserine occurs at positions 272, 276, 277, 334, and 336. Disordered regions lie at residues 344–379 (SAAF…SETE) and 393–415 (RSSV…TKRD). Residues 348–361 (SQGSRSGMSGGSRS) show a composition bias toward low complexity. Basic and acidic residues predominate over residues 365 to 376 (LRRDSESTRHDS). The N-linked (GlcNAc...) asparagine glycan is linked to Asn431. A run of 4 helical transmembrane segments spans residues 473–493 (GVGY…FPFL), 512–532 (EILT…LSII), 611–631 (VVVS…CAQV), and 645–665 (WEFL…ASLG). 2 N-linked (GlcNAc...) asparagine glycosylation sites follow: Asn674 and Asn733. The chain crosses the membrane as a helical span at residues 737 to 757 (VVILSAVSGVISDLLGFNIRL).

As to quaternary structure, interacts with FEM1B.

The protein resides in the endoplasmic reticulum membrane. It localises to the golgi apparatus. It is found in the cis-Golgi network membrane. This chain is Protein PHTF1 (PHTF1), found in Bos taurus (Bovine).